The chain runs to 322 residues: Thioredoxin reductase (322 aa).

FAD is bound by residues 11–14, 40–41, glutamine 45, asparagine 54, valine 87, and cysteine 145; these read SGPA and IA. Cysteines 142 and 145 form a disulfide. The residue at position 192 (serine 192) is a Phosphoserine. Threonine 278 is modified (phosphothreonine). Serine 279 is subject to Phosphoserine. FAD contacts are provided by residues aspartate 288 and 295 to 297; that span reads RQA.

This sequence belongs to the class-II pyridine nucleotide-disulfide oxidoreductase family. In terms of assembly, homodimer. FAD is required as a cofactor.

Its subcellular location is the cytoplasm. It catalyses the reaction [thioredoxin]-dithiol + NADP(+) = [thioredoxin]-disulfide + NADPH + H(+). The protein is Thioredoxin reductase (trr1) of Schizosaccharomyces pombe (strain 972 / ATCC 24843) (Fission yeast).